The chain runs to 532 residues: uncharacterized protein (532 aa).

13 helical membrane-spanning segments follow: residues 13-33 (MSLLIVLMAGLFLAILNQTLL), 53-73 (WLTTGYMLVNGVLIPLSAFLI), 80-100 (SLFLVAMFCFTLGTLVCGIAP), 111-131 (IQAVGGGILQPLVMTTILLIF), 142-162 (IFGLAMMFAPAVGPTLSGWII), 169-189 (IMFYGLVPIGAIVIIVAFFIF), 203-223 (LGAILSIVGFASLLYGVSEAG), 231-251 (IVLSTVIIGAIAIVAFVVQQL), 273-293 (VINIIITVALYTGMFLLPIYL), 306-326 (LLLLPGAIVMLIMSPISGILF), 334-354 (LAIIGLLVTVVTTYQYTQLTI), 361-381 (IMLIYSIRAFGMSLLMMPVMT), and 483-503 (INDAFMWATLFCVAGLILSIF).

The protein belongs to the major facilitator superfamily. EmrB family.

The protein localises to the cell membrane. This is an uncharacterized protein from Bacillus subtilis (strain 168).